The primary structure comprises 335 residues: NADH-quinone oxidoreductase subunit H (335 aa).

The next 8 helical transmembrane spans lie at 11–31, 81–101, 114–134, 154–174, 187–207, 238–258, 270–290, and 307–327; these read VILTVIKAIVILLAVVVAGAL, VIFTLAPVVAMSALLIAFAII, IGLLFFFAMAGLSVYAVLFAG, VSYEVFMGLALMGIVVQVGSF, LWFIIPQFFGFCTFFIAGVAV, FFVGEYIGIILISALLVTLFF, QLSFVWFALKTAFFILLFILL, and WKFCLPLTLINLLVTAAIVLW.

It belongs to the complex I subunit 1 family. NDH-1 is composed of 13 different subunits. Subunits NuoA, H, J, K, L, M, N constitute the membrane sector of the complex.

Its subcellular location is the cell inner membrane. It carries out the reaction a quinone + NADH + 5 H(+)(in) = a quinol + NAD(+) + 4 H(+)(out). Its function is as follows. NDH-1 shuttles electrons from NADH, via FMN and iron-sulfur (Fe-S) centers, to quinones in the respiratory chain. The immediate electron acceptor for the enzyme in this species is believed to be ubiquinone. Couples the redox reaction to proton translocation (for every two electrons transferred, four hydrogen ions are translocated across the cytoplasmic membrane), and thus conserves the redox energy in a proton gradient. This subunit may bind ubiquinone. The sequence is that of NADH-quinone oxidoreductase subunit H from Pseudomonas fluorescens (strain Pf0-1).